A 445-amino-acid chain; its full sequence is Histamine H3 receptor (445 aa).

Over 1-39 the chain is Extracellular; sequence MERAPPDGLMNASGALAGEAAAAGGARGFSAAWTAVLAA. N11 carries N-linked (GlcNAc...) asparagine glycosylation. Residues 40–60 form a helical membrane-spanning segment; the sequence is LMALLIVATVLGNALVMLAFV. The Cytoplasmic segment spans residues 61 to 70; sequence ADSSLRTQNN. Residues 71–91 form a helical membrane-spanning segment; that stretch reads FFLLNLAISDFLVGAFCIPLY. Over 92–108 the chain is Extracellular; the sequence is VPYVLTGRWTFGRGLCK. C107 and C188 are oxidised to a cystine. The chain crosses the membrane as a helical span at residues 109 to 129; that stretch reads LWLVVDYLLCASSVFNIVLIS. The Cytoplasmic portion of the chain corresponds to 130 to 156; the sequence is YDRFLSVTRAVSYRAQQGDTRRAVRKM. Residues 157–177 traverse the membrane as a helical segment; it reads ALVWVLAFLLYGPAILSWEYL. The Extracellular segment spans residues 178–196; sequence SGGSSIPEGHCYAEFFYNW. A helical transmembrane segment spans residues 197 to 217; sequence YFLITASTLEFFTPFLSVTFF. Residues 218 to 359 lie on the Cytoplasmic side of the membrane; it reads NLSIYLNIQR…LSRDKKVAKS (142 aa). 2 disordered regions span residues 234-259 and 273-336; these read DGGREAGPEPPPDAQPSPPPAPPSCW and HRYG…LEKR. Positions 241-256 are enriched in pro residues; sequence PEPPPDAQPSPPPAPP. The span at 289 to 299 shows a compositional bias: gly residues; it reads AGLGGGSGGGA. Residues 300 to 312 show a composition bias toward low complexity; it reads AASPTSSSGSSSR. The chain crosses the membrane as a helical span at residues 360–380; the sequence is LAIIVSIFGLCWAPYTLLMII. Residues 381-396 lie on the Extracellular side of the membrane; it reads RAACHGHCVPDYWYET. The helical transmembrane segment at 397 to 417 threads the bilayer; sequence SFWLLWANSAVNPVLYPLCHY. Residues 418–445 lie on the Cytoplasmic side of the membrane; it reads SFRRAFTKLLCPQKLKVQPHGSLEQCWK. Phosphoserine is present on S439.

It belongs to the G-protein coupled receptor 1 family.

It localises to the cell membrane. In terms of biological role, the H3 subclass of histamine receptors could mediate the histamine signals in CNS and peripheral nervous system. Signals through the inhibition of adenylate cyclase and displays high constitutive activity (spontaneous activity in the absence of agonist). In Mus musculus (Mouse), this protein is Histamine H3 receptor (Hrh3).